Consider the following 886-residue polypeptide: uncharacterized protein (886 aa).

Residues 1–20 form the signal peptide; the sequence is MKILKSLVLLVLFIVMPAKA. Transmembrane regions (helical) follow at residues 520-540, 563-583, 609-629, 647-667, 680-700, and 771-791; these read VIIFGLMFVAGTLKLTAIEVI, TYFFSVFTDGIDFFITNVVGA, LLFIELLQIHNGLAFIAIITI, IIAFIGVTVMISLAPFFIILM, ISTLLSYVVQPTILLIFFLLI, and FLVLFTTALLFYVYCLMSYGL.

It belongs to the TrbL/VirB6 family.

The protein localises to the cell membrane. This is an uncharacterized protein from Rickettsia typhi (strain ATCC VR-144 / Wilmington).